The following is a 294-amino-acid chain: Ribosomal protein L11 methyltransferase (294 aa).

4 residues coordinate S-adenosyl-L-methionine: Thr145, Gly167, Asp189, and Asn230.

This sequence belongs to the methyltransferase superfamily. PrmA family.

It is found in the cytoplasm. It carries out the reaction L-lysyl-[protein] + 3 S-adenosyl-L-methionine = N(6),N(6),N(6)-trimethyl-L-lysyl-[protein] + 3 S-adenosyl-L-homocysteine + 3 H(+). In terms of biological role, methylates ribosomal protein L11. The protein is Ribosomal protein L11 methyltransferase of Alkalilimnicola ehrlichii (strain ATCC BAA-1101 / DSM 17681 / MLHE-1).